An 869-amino-acid chain; its full sequence is Protein translocase subunit SecA (869 aa).

Residues Gln-88, 106–110 (GEGKT), and Asp-509 contribute to the ATP site. Residues 818-840 (QDEGLKFNQREGEDAPAVREKKI) are compositionally biased toward basic and acidic residues. Residues 818–869 (QDEGLKFNQREGEDAPAVREKKIPRNSPCPCGSGKKYKDCCGKSGPKKGILA) form a disordered region. Cys-846, Cys-848, Cys-857, and Cys-858 together coordinate Zn(2+).

The protein belongs to the SecA family. In terms of assembly, monomer and homodimer. Part of the essential Sec protein translocation apparatus which comprises SecA, SecYEG and auxiliary proteins SecDF-YajC and YidC. Zn(2+) serves as cofactor.

Its subcellular location is the cell inner membrane. The protein localises to the cytoplasm. It carries out the reaction ATP + H2O + cellular proteinSide 1 = ADP + phosphate + cellular proteinSide 2.. Functionally, part of the Sec protein translocase complex. Interacts with the SecYEG preprotein conducting channel. Has a central role in coupling the hydrolysis of ATP to the transfer of proteins into and across the cell membrane, serving as an ATP-driven molecular motor driving the stepwise translocation of polypeptide chains across the membrane. The sequence is that of Protein translocase subunit SecA from Campylobacter curvus (strain 525.92).